Reading from the N-terminus, the 452-residue chain is Cobyrinate a,c-diamide synthase (452 aa).

Residues 244–437 enclose the GATase cobBQ-type domain; the sequence is KIAYAYDEAF…VHINLYTYKE (194 aa). Catalysis depends on cysteine 327, which acts as the Nucleophile.

The protein belongs to the CobB/CbiA family. Requires Mg(2+) as cofactor.

The catalysed reaction is cob(II)yrinate + 2 L-glutamine + 2 ATP + 2 H2O = cob(II)yrinate a,c diamide + 2 L-glutamate + 2 ADP + 2 phosphate + 2 H(+). The protein operates within cofactor biosynthesis; adenosylcobalamin biosynthesis; cob(II)yrinate a,c-diamide from sirohydrochlorin (anaerobic route): step 10/10. In terms of biological role, catalyzes the ATP-dependent amidation of the two carboxylate groups at positions a and c of cobyrinate, using either L-glutamine or ammonia as the nitrogen source. The chain is Cobyrinate a,c-diamide synthase from Caldanaerobacter subterraneus subsp. tengcongensis (strain DSM 15242 / JCM 11007 / NBRC 100824 / MB4) (Thermoanaerobacter tengcongensis).